The primary structure comprises 101 residues: Small ribosomal subunit protein uS14 (101 aa).

It belongs to the universal ribosomal protein uS14 family. Part of the 30S ribosomal subunit. Contacts proteins S3 and S10.

Functionally, binds 16S rRNA, required for the assembly of 30S particles and may also be responsible for determining the conformation of the 16S rRNA at the A site. The polypeptide is Small ribosomal subunit protein uS14 (Brucella abortus (strain S19)).